We begin with the raw amino-acid sequence, 745 residues long: ATP-dependent zinc metalloprotease FtsH (745 aa).

Residues 1-11 (MNNRRNGLFRN) are Cytoplasmic-facing. The chain crosses the membrane as a helical span at residues 12–32 (SLFYILMFLSLMGIIYFFFGG). The Extracellular segment spans residues 33–131 (NSGSQTQNIR…VTAKAEESSG (99 aa)). The helical transmembrane segment at 132–152 (IWVTLLMYIAPVILMLFLFYM) threads the bilayer. The Cytoplasmic portion of the chain corresponds to 153–745 (MMGQAGQGGG…SSQDDTNSQA (593 aa)). Position 227–234 (227–234 (GPPGTGKT)) interacts with ATP. Histidine 449 contacts Zn(2+). Glutamate 450 is an active-site residue. Positions 453 and 525 each coordinate Zn(2+). Positions 630–673 (MPEKDSNEFPSEKAATFEESKRELERREAEKHAQNQSADDKQAD) are enriched in basic and acidic residues. Residues 630–745 (MPEKDSNEFP…SSQDDTNSQA (116 aa)) form a disordered region. A compositionally biased stretch (low complexity) spans 690-704 (SESDASSEVSADSSV). Over residues 705-745 (NSTANSATESATDSDVATSATGLPNAESATPSSQDDTNSQA) the composition is skewed to polar residues.

This sequence in the central section; belongs to the AAA ATPase family. In the C-terminal section; belongs to the peptidase M41 family. Homohexamer. Zn(2+) is required as a cofactor.

It is found in the cell membrane. Acts as a processive, ATP-dependent zinc metallopeptidase for both cytoplasmic and membrane proteins. Plays a role in the quality control of integral membrane proteins. This is ATP-dependent zinc metalloprotease FtsH from Lactiplantibacillus plantarum (strain ATCC BAA-793 / NCIMB 8826 / WCFS1) (Lactobacillus plantarum).